The chain runs to 442 residues: HTH-type transcriptional regulator NorG (442 aa).

Residues 2–46 (KIPPQRQLAIQYNVNRVTIIKSIELLEAEGFIYTKVGSGTYVNDY) form the HTH gntR-type domain. Positions 6–25 (QRQLAIQYNVNRVTIIKSIE) form a DNA-binding region, H-T-H motif. K288 bears the N6-(pyridoxal phosphate)lysine mark.

In the C-terminal section; belongs to the class-I pyridoxal-phosphate-dependent aminotransferase family. Requires pyridoxal 5'-phosphate as cofactor.

Its function is as follows. Positively regulates the expression of the NorB efflux pump and negatively regulates the expression of the AbcA efflux pump. Binds specifically to the promoters of norA, norB and norC and abcA genes. Could also have an aminotransferase activity. The polypeptide is HTH-type transcriptional regulator NorG (norG) (Staphylococcus aureus (strain Mu50 / ATCC 700699)).